The sequence spans 416 residues: CinA-like protein (416 aa).

It belongs to the CinA family.

This chain is CinA-like protein, found in Solibacter usitatus (strain Ellin6076).